The following is a 170-amino-acid chain: Peptide deformylase (170 aa).

The Fe cation site is built by Cys91 and His133. Glu134 is a catalytic residue. His137 lines the Fe cation pocket.

Belongs to the polypeptide deformylase family. Fe(2+) is required as a cofactor.

The enzyme catalyses N-terminal N-formyl-L-methionyl-[peptide] + H2O = N-terminal L-methionyl-[peptide] + formate. Functionally, removes the formyl group from the N-terminal Met of newly synthesized proteins. Requires at least a dipeptide for an efficient rate of reaction. N-terminal L-methionine is a prerequisite for activity but the enzyme has broad specificity at other positions. This Glaesserella parasuis serovar 5 (strain SH0165) (Haemophilus parasuis) protein is Peptide deformylase.